Consider the following 452-residue polypeptide: Flavanone 7-O-glucoside 2''-O-beta-L-rhamnosyltransferase (452 aa).

Residue histidine 21 is the Proton acceptor of the active site. An anthocyanidin is bound at residue histidine 21. Residue aspartate 121 is the Charge relay of the active site. A helical transmembrane segment spans residues 136 to 156; that stretch reads IAAILFLPLSAVACSFLLHNI. UDP-beta-L-rhamnose is bound by residues serine 268, valine 330, histidine 347, glycine 351, serine 352, and glutamate 355. Residues 407–436 are a coiled coil; it reads KHVVLQEEAKQIRRKANEISESMKKIGDAE.

Belongs to the UDP-glycosyltransferase family. In terms of assembly, monomer. As to expression, expressed in young fruits and leaves.

The protein resides in the membrane. It carries out the reaction flavanone 7-O-beta-D-glucoside + UDP-beta-L-rhamnose = flavanone 7-O-[alpha-L-rhamnosyl-(1-&gt;2)-beta-D-glucoside] + UDP + H(+). Its function is as follows. Involved in the production of the bitter neohesperidosides in citrus. Shows a strict specificity for UDP-rhamnose as donor. In Citrus maxima (Pomelo), this protein is Flavanone 7-O-glucoside 2''-O-beta-L-rhamnosyltransferase (C12RT1).